The primary structure comprises 199 residues: Recombination protein RecR (199 aa).

Residues 57–72 (CQKCRTFTEQSLCPIC) form a C4-type zinc finger. The 96-residue stretch at 81–176 (DTLCVVETPA…AVSRIAHGVP (96 aa)) folds into the Toprim domain.

Belongs to the RecR family.

Functionally, may play a role in DNA repair. It seems to be involved in an RecBC-independent recombinational process of DNA repair. It may act with RecF and RecO. This chain is Recombination protein RecR, found in Shewanella amazonensis (strain ATCC BAA-1098 / SB2B).